We begin with the raw amino-acid sequence, 398 residues long: S-adenosylmethionine synthase (398 aa).

136-141 serves as a coordination point for ATP; that stretch reads GTGSSD.

Belongs to the AdoMet synthase 2 family. Mg(2+) is required as a cofactor.

The enzyme catalyses L-methionine + ATP + H2O = S-adenosyl-L-methionine + phosphate + diphosphate. It functions in the pathway amino-acid biosynthesis; S-adenosyl-L-methionine biosynthesis; S-adenosyl-L-methionine from L-methionine: step 1/1. Functionally, catalyzes the formation of S-adenosylmethionine from methionine and ATP. The polypeptide is S-adenosylmethionine synthase (Methanosarcina acetivorans (strain ATCC 35395 / DSM 2834 / JCM 12185 / C2A)).